The following is a 222-amino-acid chain: UPF0758 protein YicR (222 aa).

The MPN domain maps to 100-222; it reads PLLSPEMTRE…YVSFAERGWI (123 aa). Zn(2+)-binding residues include His-171, His-173, and Asp-184. The JAMM motif motif lies at 171–184; sequence HNHPSGCAEPSKAD.

It belongs to the UPF0758 family. YicR subfamily.

The sequence is that of UPF0758 protein YicR from Shigella dysenteriae serotype 1 (strain Sd197).